The chain runs to 43 residues: MALLDLQAMDTPAEDSFGELATGSQVSLLVCEYSSLSVVLCTP.

The signal sequence occupies residues 1-21 (MALLDLQAMDTPAEDSFGELA). 2 consecutive cross-links (lanthionine (Ser-Cys)) follow at residues 24-31 (SQVSLLVC) and 34-41 (SSLSVVLC). 2,3-didehydroalanine (Ser) is present on residues Ser27 and Ser37.

This sequence belongs to the lanthionine-containing morphogen protein family. Maturation involves the enzymatic conversion of Ser into dehydrated AA and the formation of thioether bonds with cysteine. This is followed by membrane translocation and cleavage of the modified precursor.

Lanthionine-containing peptide devoid of antibiotic properties, involved in the formation of aerial mycelium. Suggested to self-assemble at air-water interfaces, thus providing a film of surfactant through which nascent aerial hyphae can emerge. The aerial hyphae differentiate further into spores. The protein is Lanthionine-containing peptide SapB (ramS) of Streptomyces griseus subsp. griseus (strain JCM 4626 / CBS 651.72 / NBRC 13350 / KCC S-0626 / ISP 5235).